A 454-amino-acid chain; its full sequence is Gustatory and odorant receptor 21a (454 aa).

The Cytoplasmic portion of the chain corresponds to 1-114; that stretch reads MTFLDRTMSF…LPRTGYSWGS (114 aa). Residues 115-135 form a helical membrane-spanning segment; that stretch reads KQVMWAIFIYSCQTTIVVLVL. Over 136–153 the chain is Extracellular; the sequence is RERVKKFVTSPDKRFDEA. Residues 154–174 form a helical membrane-spanning segment; it reads IYNVIFISLLFTNFLLPVASW. Over 175 to 206 the chain is Cytoplasmic; the sequence is RHGPQVAIFKNMWTNYQYKFFKTTGSPIVFPN. The helical transmembrane segment at 207–227 threads the bilayer; the sequence is LYPLTWSLCVFSWLLSIAINL. The Extracellular segment spans residues 228–237; that stretch reads SQYFLQPDFR. A helical transmembrane segment spans residues 238–258; sequence LWYTFAYYPIIAMLNCFCSLW. The Cytoplasmic segment spans residues 259–312; the sequence is YINCNAFGTASRALSDALQTTIRGEKPAQKLTEYRHLWVDLSHMMQQLGRAYSN. Residues 313–333 form a helical membrane-spanning segment; that stretch reads MYGMYCLVIFFTTIIATYGSI. At 334–345 the chain is on the extracellular side; that stretch reads SEIIDHGATYKE. A helical membrane pass occupies residues 346–366; sequence VGLFVIVFYCMGLLYIICNEA. Residues 367–422 are Cytoplasmic-facing; the sequence is HYASRKVGLDFQTKLLNINLTAVDAATQKEVEMLLVAINKNPPIMNLDGYANINRE. The helical transmembrane segment at 423–443 threads the bilayer; sequence LITTNISFMATYLVVLLQFKI. At 444 to 454 the chain is on the extracellular side; sequence TEQRRIGQQQA.

The protein belongs to the insect chemoreceptor superfamily. Gustatory receptor (GR) family. Gr21a subfamily. As to quaternary structure, gr21a and Gr63a probably form a heterodimer that responds to CO(2). In terms of tissue distribution, expressed in the adult labellar chemosensory neurons. Carbon dioxide-responsive neurons coexpress Gr21a and Gr63a in a pair of chemosensory receptors at both larval and adult life stages. A single bilateral neuron, expressing the Gr21a receptor, is responsible for CO(2) detection in larvae.

It is found in the cell membrane. Gustatory and odorant receptor which mediates acceptance or avoidance behavior, depending on its substrates. Gr21a and Gr63a together are sufficient for carbon dioxide detection and avoidance behavior. It is possible that the CO(2) receptors Gr63a and Gr21a activate the TRPC channels through Galpha49B and Plc21C. This innate olfactory avoidance behavior can be inhibited by inhibitory interactions of the odors such as 1-hexanol and 2,3-butanedione with Gr21a and Gr63a. This Drosophila melanogaster (Fruit fly) protein is Gustatory and odorant receptor 21a (Gr21a).